Consider the following 258-residue polypeptide: Hydroxyethylthiazole kinase (258 aa).

Residue Met37 coordinates substrate. The ATP site is built by Arg112 and Thr158. Residue Ala185 participates in substrate binding.

The protein belongs to the Thz kinase family. It depends on Mg(2+) as a cofactor.

It catalyses the reaction 5-(2-hydroxyethyl)-4-methylthiazole + ATP = 4-methyl-5-(2-phosphooxyethyl)-thiazole + ADP + H(+). The protein operates within cofactor biosynthesis; thiamine diphosphate biosynthesis; 4-methyl-5-(2-phosphoethyl)-thiazole from 5-(2-hydroxyethyl)-4-methylthiazole: step 1/1. Its function is as follows. Catalyzes the phosphorylation of the hydroxyl group of 4-methyl-5-beta-hydroxyethylthiazole (THZ). This is Hydroxyethylthiazole kinase from Rhizobium etli (strain ATCC 51251 / DSM 11541 / JCM 21823 / NBRC 15573 / CFN 42).